The following is a 365-amino-acid chain: Galactoside alpha-(1,2)-fucosyltransferase 1 (365 aa).

At 1–8 (MWVPSRRH) the chain is on the cytoplasmic side. The chain crosses the membrane as a helical; Signal-anchor for type II membrane protein span at residues 9–28 (LCLTFLLVCVLAAIFFLNVY). Over 29–365 (QDLFYSGLDL…LSPLQMLAGP (337 aa)) the chain is Lumenal. 3 N-linked (GlcNAc...) asparagine glycosylation sites follow: N65, N301, and N327.

Belongs to the glycosyltransferase 11 family.

The protein resides in the golgi apparatus. Its subcellular location is the golgi stack membrane. It carries out the reaction a beta-D-galactosyl-(1-&gt;4)-N-acetyl-beta-D-glucosaminyl derivative + GDP-beta-L-fucose = an alpha-L-Fuc-(1-&gt;2)-beta-D-Gal-(1-&gt;4)-beta-D-GlcNAc derivative + GDP + H(+). It catalyses the reaction a ganglioside GA1 + GDP-beta-L-fucose = a ganglioside Fuc-GA1 + GDP + H(+). The enzyme catalyses a beta-D-Gal-(1-&gt;3)-beta-D-GlcNAc-(1-&gt;3)-beta-D-Gal-(1-&gt;4)-beta-D-Glc-(1&lt;-&gt;1')-Cer(d18:1(4E)) + GDP-beta-L-fucose = alpha-L-fucosyl-(1-&gt;2)- beta-D-galactosyl-(1-&gt;3)-N-acetyl-beta-D-glucosaminyl-(1-&gt;3)-beta-D-galactosyl-(1-&gt;4)-beta-D-glucosyl-(1&lt;-&gt;1')-N-acylsphing-4-enine + GDP + H(+). The catalysed reaction is a neolactoside nLc4Cer(d18:1(4E)) + GDP-beta-L-fucose = a neolactoside IV(2)-alpha-Fuc-nLc4Cer(d18:1(4E)) + GDP + H(+). It carries out the reaction a ganglioside GM1 + GDP-beta-L-fucose = a ganglioside Fuc-GM1 + GDP + H(+). It catalyses the reaction beta-D-galactosyl-(1-&gt;3)-N-acetyl-D-galactosamine + GDP-beta-L-fucose = alpha-L-fucosyl-(1-&gt;2)-beta-D-galactosyl-(1-&gt;3)-N-acetyl-D-galactosamine + GDP + H(+). It functions in the pathway protein modification; protein glycosylation. Functionally, catalyzes the transfer of L-fucose, from a guanosine diphosphate-beta-L-fucose, to the terminal galactose residue of glycoconjugates through an alpha(1,2) linkage leading to H antigen synthesis that is an intermediate substrate in the synthesis of ABO blood group antigens. H antigen is essential for maturation of the glomerular layer of the main olfactory bulb, in cell migration and early cell-cell contacts during tumor associated angiogenesis. Preferentially fucosylates soluble lactose and to a lesser extent fucosylates glycolipids gangliosides GA1 and GM1a. The chain is Galactoside alpha-(1,2)-fucosyltransferase 1 from Sus scrofa (Pig).